The following is a 124-amino-acid chain: Ragulator complex protein LAMTOR3 homolog (124 aa).

It belongs to the LAMTOR3 family. Part of the Ragulator complex composed of Lamtor3, Lamtor2, CG14184, CG14812, and Lamtor4.

In terms of biological role, regulator of the TOR pathway, a signaling cascade that promotes cell growth in response to growth factors, energy levels, and amino acids. As part of the Ragulator complex, may activate the TOR signaling cascade in response to amino acids. In Drosophila melanogaster (Fruit fly), this protein is Ragulator complex protein LAMTOR3 homolog.